The primary structure comprises 236 residues: Protein CUSTOS (236 aa).

Disordered stretches follow at residues 1 to 57 (MSES…GTTP) and 83 to 236 (VEPA…KKDE). Composition is skewed to basic and acidic residues over residues 10-51 (NTAR…HDGN) and 156-165 (EKTEEKSTKE). The Nucleolar localization signal (NLS1) signature appears at 173-181 (KMKKKKKRK). Basic and acidic residues predominate over residues 182–196 (TSSEESQDKVNHQTE). Over residues 197-210 (KQSNVEGNQEQTTA) the composition is skewed to polar residues. The Nucleolar localization signal (NLS2) motif lies at 211 to 219 (GERLKKKKK). Basic residues predominate over residues 214–227 (LKKKKKKKKKKRKK).

It belongs to the CUSTOS family. Interacts (via NLS1 and NLS2) with dvl2; the interaction is negatively regulated by Wnt stimulation. Interacts with csnk1a1. Interacts with ctnnb1; the interaction is positively regulated by Wnt stimulation. In terms of processing, phosphorylated by ck1/csnk1a1.

The protein resides in the nucleus envelope. In terms of biological role, essential for Spemann-Mangold organizer formation and subsequent anterior head development in the embryo. Inhibits canonical Wnt signaling pathway by antagonizing nuclear import of beta-catenin (ctnnb1) during embryogenesis. This Danio rerio (Zebrafish) protein is Protein CUSTOS.